The primary structure comprises 338 residues: Lipoate-protein ligase A (338 aa).

One can recognise a BPL/LPL catalytic domain in the interval 29–216; it reads PATQRVLFLW…AFFSHYGERV (188 aa). Residues R71, 76–79, and K134 each bind ATP; that span reads GAVF. A (R)-lipoate-binding site is contributed by K134.

This sequence belongs to the LplA family. In terms of assembly, monomer.

Its subcellular location is the cytoplasm. The catalysed reaction is L-lysyl-[lipoyl-carrier protein] + (R)-lipoate + ATP = N(6)-[(R)-lipoyl]-L-lysyl-[lipoyl-carrier protein] + AMP + diphosphate + H(+). The protein operates within protein modification; protein lipoylation via exogenous pathway; protein N(6)-(lipoyl)lysine from lipoate: step 1/2. It participates in protein modification; protein lipoylation via exogenous pathway; protein N(6)-(lipoyl)lysine from lipoate: step 2/2. Its function is as follows. Catalyzes both the ATP-dependent activation of exogenously supplied lipoate to lipoyl-AMP and the transfer of the activated lipoyl onto the lipoyl domains of lipoate-dependent enzymes. The protein is Lipoate-protein ligase A of Klebsiella pneumoniae (strain 342).